Reading from the N-terminus, the 493-residue chain is tRNA (uracil-5-)-methyltransferase homolog B (493 aa).

A mitochondrion-targeting transit peptide spans 1-14 (MHNPRLFLSRAGFF). The S-adenosyl-L-methionine site is built by glutamine 312, glutamate 362, and asparagine 412. The Nucleophile role is filled by cysteine 440. The Proton acceptor role is filled by glutamate 486.

Belongs to the class I-like SAM-binding methyltransferase superfamily. RNA M5U methyltransferase family.

The protein resides in the mitochondrion matrix. It catalyses the reaction uridine(54) in tRNA + S-adenosyl-L-methionine = 5-methyluridine(54) in tRNA + S-adenosyl-L-homocysteine + H(+). The enzyme catalyses a uridine in 12S rRNA + S-adenosyl-L-methionine = a 5-methyluridine in 12S rRNA + S-adenosyl-L-homocysteine + H(+). Mitochondrial S-adenosyl-L-methionine-dependent methyltransferase that catalyzes the formation of 5-methyl-uridine in tRNAs and 12S rRNA. Catalyzes the methylation of uridine at position 54 (m5U54) in all tRNAs. Specifically methylates the uridine in position 425 of 12S rRNA (m5U425). Does not affect RNA stability or mitochondrial translation. The protein is tRNA (uracil-5-)-methyltransferase homolog B of Mus musculus (Mouse).